The primary structure comprises 250 residues: MSQAAETLDGWYSLHLFYAVDWASLRIVPKDERDALVTEFQSFLENTATVRSSKSGDQAIYNITGQKADLLLWFLRPEMKSLNHIENEFNKLRIADFLIPTYSYVSVIELSNYLAGKSDEDPYENPHIKARLYPELPHSDYICFYPMNKRRNETYNWYMLTMEERQKLMYDHGMIGRKYAGKIKQFITGSVGFDDFEWGVTLFSDDVLQFKKIVYEMRFDETTARYGEFGSFFVGHIINTNEFDQFFAIS.

Residues arginine 131, 145 to 149, histidine 172, and glutamine 185 each bind Fe-coproporphyrin III; that span reads YPMNK. Tyrosine 145 is an active-site residue.

It belongs to the ChdC family. Type 1 subfamily. The cofactor is Fe-coproporphyrin III.

It catalyses the reaction Fe-coproporphyrin III + 2 H2O2 + 2 H(+) = heme b + 2 CO2 + 4 H2O. It carries out the reaction Fe-coproporphyrin III + H2O2 + H(+) = harderoheme III + CO2 + 2 H2O. The enzyme catalyses harderoheme III + H2O2 + H(+) = heme b + CO2 + 2 H2O. Its pathway is porphyrin-containing compound metabolism; protoheme biosynthesis. In terms of biological role, involved in coproporphyrin-dependent heme b biosynthesis. Catalyzes the decarboxylation of Fe-coproporphyrin III (coproheme) to heme b (protoheme IX), the last step of the pathway. The reaction occurs in a stepwise manner with a three-propionate intermediate. The protein is Coproheme decarboxylase of Staphylococcus aureus (strain USA300 / TCH1516).